The sequence spans 404 residues: Formate-dependent phosphoribosylglycinamide formyltransferase (404 aa).

Residues 25–26 (EL) and Glu-85 contribute to the N(1)-(5-phospho-beta-D-ribosyl)glycinamide site. ATP-binding positions include Arg-118, Lys-159, 164–169 (SSGKGQ), 199–202 (EGFI), and Glu-207. The region spanning 123 to 318 (RLAAEELGLA…EFELHARAIL (196 aa)) is the ATP-grasp domain. 2 residues coordinate Mg(2+): Glu-277 and Glu-289. Residues Asp-296, Lys-365, and 372–373 (RR) contribute to the N(1)-(5-phospho-beta-D-ribosyl)glycinamide site.

Belongs to the PurK/PurT family. Homodimer.

It carries out the reaction N(1)-(5-phospho-beta-D-ribosyl)glycinamide + formate + ATP = N(2)-formyl-N(1)-(5-phospho-beta-D-ribosyl)glycinamide + ADP + phosphate + H(+). Its pathway is purine metabolism; IMP biosynthesis via de novo pathway; N(2)-formyl-N(1)-(5-phospho-D-ribosyl)glycinamide from N(1)-(5-phospho-D-ribosyl)glycinamide (formate route): step 1/1. Its function is as follows. Involved in the de novo purine biosynthesis. Catalyzes the transfer of formate to 5-phospho-ribosyl-glycinamide (GAR), producing 5-phospho-ribosyl-N-formylglycinamide (FGAR). Formate is provided by PurU via hydrolysis of 10-formyl-tetrahydrofolate. The sequence is that of Formate-dependent phosphoribosylglycinamide formyltransferase from Burkholderia vietnamiensis (strain G4 / LMG 22486) (Burkholderia cepacia (strain R1808)).